A 380-amino-acid polypeptide reads, in one-letter code: Cytochrome b (380 aa).

4 helical membrane passes run 34–54 (FGSL…FLAM), 78–99 (WLLR…YFHI), 114–134 (WYTG…GYIL), and 179–199 (FFTL…IHLL). Heme b is bound by residues H84 and H98. Heme b contacts are provided by H183 and H197. H202 is an a ubiquinone binding site. 4 helical membrane-spanning segments follow: residues 227–247 (YKDL…TLFL), 289–309 (LGGV…PTLH), 321–341 (FTQI…WIGA), and 348–368 (FIMI…LLIP).

Belongs to the cytochrome b family. As to quaternary structure, the cytochrome bc1 complex contains 3 respiratory subunits (MT-CYB, CYC1 and UQCRFS1), 2 core proteins (UQCRC1 and UQCRC2) and probably 6 low-molecular weight proteins. It depends on heme b as a cofactor.

It localises to the mitochondrion inner membrane. Component of the ubiquinol-cytochrome c reductase complex (complex III or cytochrome b-c1 complex) that is part of the mitochondrial respiratory chain. The b-c1 complex mediates electron transfer from ubiquinol to cytochrome c. Contributes to the generation of a proton gradient across the mitochondrial membrane that is then used for ATP synthesis. This Pelomedusa subrufa (African side-necked turtle) protein is Cytochrome b (MT-CYB).